Consider the following 167-residue polypeptide: Translationally-controlled tumor protein homolog (167 aa).

A TCTP domain is found at 1–167 (MIIFTDVISG…WKHGVSEDKI (167 aa)).

This sequence belongs to the TCTP family.

The protein localises to the cytoplasm. It localises to the cytoskeleton. Its function is as follows. Involved in protein synthesis. Involved in microtubule stabilization. In Debaryomyces hansenii (strain ATCC 36239 / CBS 767 / BCRC 21394 / JCM 1990 / NBRC 0083 / IGC 2968) (Yeast), this protein is Translationally-controlled tumor protein homolog.